A 191-amino-acid chain; its full sequence is Oleosin 20.3 kDa (191 aa).

Position 2 is an N-acetylalanine (A2). Residues A2–A54 form a polar region. The next 2 helical transmembrane spans lie at I52–T72 and L99–L119. Residues L55–Y128 form a hydrophobic region.

This sequence belongs to the oleosin family.

Its subcellular location is the lipid droplet. It is found in the membrane. In terms of biological role, may have a structural role to stabilize the lipid body during desiccation of the seed by preventing coalescence of the oil. Probably interacts with both lipid and phospholipid moieties of lipid bodies. May also provide recognition signals for specific lipase anchorage in lipolysis during seedling growth. The protein is Oleosin 20.3 kDa (OL2) of Arabidopsis thaliana (Mouse-ear cress).